The chain runs to 283 residues: Acetylglutamate kinase (283 aa).

Substrate-binding positions include 64–65 (GG), Arg86, and Asn179.

Belongs to the acetylglutamate kinase family. ArgB subfamily.

It localises to the cytoplasm. The catalysed reaction is N-acetyl-L-glutamate + ATP = N-acetyl-L-glutamyl 5-phosphate + ADP. It functions in the pathway amino-acid biosynthesis; L-arginine biosynthesis; N(2)-acetyl-L-ornithine from L-glutamate: step 2/4. Catalyzes the ATP-dependent phosphorylation of N-acetyl-L-glutamate. This Campylobacter hominis (strain ATCC BAA-381 / DSM 21671 / CCUG 45161 / LMG 19568 / NCTC 13146 / CH001A) protein is Acetylglutamate kinase.